Reading from the N-terminus, the 340-residue chain is Glutaminase 2 (340 aa).

Residues Ser89, Asn140, Asn191, Tyr215, and Tyr267 each contribute to the substrate site.

It belongs to the glutaminase family. Homotetramer.

It catalyses the reaction L-glutamine + H2O = L-glutamate + NH4(+). The sequence is that of Glutaminase 2 from Yersinia pestis.